Reading from the N-terminus, the 251-residue chain is RING-H2 finger protein ATL10 (251 aa).

The chain crosses the membrane as a helical span at residues 59–79 (MMLLSILICGIICCLGLHYII). An RING-type; atypical zinc finger spans residues 135–177 (CVICLSDFVSGEQLRLLPKCNHGFHVRCIDKWLQQHLTCPKCR).

Belongs to the RING-type zinc finger family. ATL subfamily.

It localises to the membrane. The catalysed reaction is S-ubiquitinyl-[E2 ubiquitin-conjugating enzyme]-L-cysteine + [acceptor protein]-L-lysine = [E2 ubiquitin-conjugating enzyme]-L-cysteine + N(6)-ubiquitinyl-[acceptor protein]-L-lysine.. The protein operates within protein modification; protein ubiquitination. The sequence is that of RING-H2 finger protein ATL10 (ATL10) from Arabidopsis thaliana (Mouse-ear cress).